Consider the following 310-residue polypeptide: Probable RuBisCO transcriptional regulator (310 aa).

Residues 6–63 (FTLDQLRILKAIASEGSFKKAAESLYISQPAVSLQIQNLEKQLNIPIFDRANRKAVFT) form the HTH lysR-type domain. A DNA-binding region (H-T-H motif) is located at residues 23-42 (FKKAAESLYISQPAVSLQIQ).

This sequence belongs to the LysR transcriptional regulatory family.

The protein localises to the plastid. The protein resides in the chloroplast. In terms of biological role, trans-acting transcriptional regulator of RuBisCO genes (rbcL and rbcS) expression. This chain is Probable RuBisCO transcriptional regulator (rbcR), found in Guillardia theta (Cryptophyte).